The sequence spans 80 residues: uncharacterized protein (80 aa).

A helical transmembrane segment spans residues 12 to 32 (FKIIALILLIVLIINLSYKLF).

Its subcellular location is the membrane. This is an uncharacterized protein from Saccharomyces cerevisiae (strain ATCC 204508 / S288c) (Baker's yeast).